The chain runs to 348 residues: Dihydroorotase (348 aa).

Residues H17 and H19 each coordinate Zn(2+). Residues 19–21 (HLR) and N45 each bind substrate. 3 residues coordinate Zn(2+): K103, H140, and H178. K103 bears the N6-carboxylysine mark. H140 serves as a coordination point for substrate. Position 223 (L223) interacts with substrate. A Zn(2+)-binding site is contributed by D251. The active site involves D251. Substrate is bound by residues H255 and A267.

It belongs to the metallo-dependent hydrolases superfamily. DHOase family. Class II DHOase subfamily. As to quaternary structure, homodimer. The cofactor is Zn(2+).

It catalyses the reaction (S)-dihydroorotate + H2O = N-carbamoyl-L-aspartate + H(+). The protein operates within pyrimidine metabolism; UMP biosynthesis via de novo pathway; (S)-dihydroorotate from bicarbonate: step 3/3. Functionally, catalyzes the reversible cyclization of carbamoyl aspartate to dihydroorotate. This Shigella dysenteriae serotype 1 (strain Sd197) protein is Dihydroorotase.